The chain runs to 72 residues: Alpha-elapitoxin-Dpp2d (72 aa).

5 disulfides stabilise this stretch: Cys-3/Cys-21, Cys-14/Cys-42, Cys-27/Cys-31, Cys-46/Cys-57, and Cys-58/Cys-63. Position 72 is an arginine amide (Arg-72).

It belongs to the three-finger toxin family. Long-chain subfamily. Type II alpha-neurotoxin sub-subfamily. In terms of assembly, monomer (predominant). Post-translationally, amidation does not significantly affect toxin selectivity, since the activity profile and binding data are reminiscent of classical long-chain 3-finger toxins with a free carboxyl termini. As to expression, expressed by the venom gland.

It is found in the secreted. In terms of biological role, binds with high affinity to muscular (IC(50)=114 nM) and neuronal (alpha-7/CHRNA7) (IC(50)=58 nM) nicotinic acetylcholine receptor (nAChR) and inhibits acetylcholine from binding to the receptor, thereby impairing neuromuscular and neuronal transmission. Competitive radioligand binding assays also demonstrate that this toxin competes with epibatidine binding to the Lymnaea stagnalis acetylcholine-binding protein (Ls-AChBP) (IC(50)=4.9 nM). The protein is Alpha-elapitoxin-Dpp2d of Dendroaspis polylepis polylepis (Black mamba).